The primary structure comprises 184 residues: uncharacterized protein (184 aa).

Belongs to the TorD/DmsD family.

This is an uncharacterized protein from Haemophilus influenzae (strain ATCC 51907 / DSM 11121 / KW20 / Rd).